Here is a 260-residue protein sequence, read N- to C-terminus: UPF0246 protein Bcen2424_2223 (260 aa).

This sequence belongs to the UPF0246 family.

The protein is UPF0246 protein Bcen2424_2223 of Burkholderia cenocepacia (strain HI2424).